The following is a 289-amino-acid chain: Phosphatidylglycerol--prolipoprotein diacylglyceryl transferase (289 aa).

The next 4 membrane-spanning stretches (helical) occupy residues 21–41 (IGPLSIRWYGLLIASAVLLGI), 53–73 (IDPNAIADLAVWLVIGAIPAA), 95–115 (IWHGGIAIHGAILGGTAALIL), and 122–142 (IPIWQLTDVVVPSLALGQAIG). Arginine 143 serves as a coordination point for a 1,2-diacyl-sn-glycero-3-phospho-(1'-sn-glycerol). A run of 3 helical transmembrane segments spans residues 182 to 202 (PTFLYESLWNLLLCLLLIWLF), 215 to 235 (GVMTCIYLIGYSLGRIWIEGL), and 247 to 267 (IAQMVSIVAIAFGVLGLVWIY).

Belongs to the Lgt family.

It is found in the cell inner membrane. It catalyses the reaction L-cysteinyl-[prolipoprotein] + a 1,2-diacyl-sn-glycero-3-phospho-(1'-sn-glycerol) = an S-1,2-diacyl-sn-glyceryl-L-cysteinyl-[prolipoprotein] + sn-glycerol 1-phosphate + H(+). The protein operates within protein modification; lipoprotein biosynthesis (diacylglyceryl transfer). In terms of biological role, catalyzes the transfer of the diacylglyceryl group from phosphatidylglycerol to the sulfhydryl group of the N-terminal cysteine of a prolipoprotein, the first step in the formation of mature lipoproteins. The chain is Phosphatidylglycerol--prolipoprotein diacylglyceryl transferase from Synechococcus elongatus (strain ATCC 33912 / PCC 7942 / FACHB-805) (Anacystis nidulans R2).